A 60-amino-acid chain; its full sequence is Beta-defensin 11 (60 aa).

The signal sequence occupies residues 1 to 22 (MRLHHLLLALLFLVLSAGSGIS). 3 cysteine pairs are disulfide-bonded: Cys27-Cys56, Cys34-Cys49, and Cys39-Cys57.

This sequence belongs to the beta-defensin family. Neutrophilic granules.

It is found in the secreted. Its function is as follows. Has bactericidal activity. Active against E.coli ML35 and S.aureus 502A. The protein is Beta-defensin 11 (DEFB11) of Bos taurus (Bovine).